The following is a 475-amino-acid chain: E3 ubiquitin-protein ligase TRIM62 (475 aa).

Residues 11–54 (CSICLSIYQDPVSLGCEHYFCRRCITEHWVRQEAQGARDCPECR) form an RING-type zinc finger. Residues 88–128 (RAARPCQAHDKVKLFCLTDRALLCFFCDEPALHEQHQVTGI) form a B box-type zinc finger. Zn(2+)-binding residues include Cys-93, His-96, Cys-114, and His-120. Residues 127–241 (GIDDAFDELQ…LQERLAETDR (115 aa)) are a coiled coil. In terms of domain architecture, B30.2/SPRY spans 277 to 475 (PLQYTIWKSL…QPLRINTVRI (199 aa)).

This sequence belongs to the TRIM/RBCC family. Interacts with the ubiquitin-conjugating enzyme, UBE2D2. Post-translationally, polyubiquitinated, autoubiquitinated in the presence of UBE2D2.

The protein localises to the cytoplasm. The catalysed reaction is S-ubiquitinyl-[E2 ubiquitin-conjugating enzyme]-L-cysteine + [acceptor protein]-L-lysine = [E2 ubiquitin-conjugating enzyme]-L-cysteine + N(6)-ubiquitinyl-[acceptor protein]-L-lysine.. Its pathway is protein modification; protein ubiquitination. Functionally, E3 ubiquitin ligase that plays a role in antifungal immunity by mediating 'Lys-27'-linked ubiquitination of CARD9 downstream of C-type lectin receptors; leading to CARD9 activation, followed by activation of NF-kappa-B and MAP kinase p38 pathways. E3 ubiquitin ligase activity is dependent on E2 ubiquitin-conjugating enzyme UBE2D2. The chain is E3 ubiquitin-protein ligase TRIM62 from Homo sapiens (Human).